The chain runs to 437 residues: Probable N-acetylmuramidase (437 aa).

An N-terminal signal peptide occupies residues 1 to 57; it reads MPVSRVKVKNRHLKKKTKKPLAFYKPTTKFVGAVLIAGTLTTTHELLLQQTSPMVQA. Disordered stretches follow at residues 217 to 244, 291 to 319, and 367 to 392; these read SSAG…SSTT, SSTN…ASQT, and ATSN…NSNA. The LysM 1 domain maps to 243 to 286; sequence TTYTVKSGDTLWGISQRYGISVAQIQSANNLKSTIIYIGQKLLL. A compositionally biased stretch (low complexity) spans 291 to 317; it reads SSTNSGGSNNSASTTPTTSVTPAKPAS. Positions 319–362 constitute a LysM 2 domain; that stretch reads TSVKVKSGDTLWALSVKYKTSIAQLKSWNHLSSDTIYIGQNLIV. A LysM 3 domain is found at 393–436; it reads SIHKVVKGDTLWGLSQKSGSPIASIKAWNHLSSDTILIGQYLRI.

Belongs to the glycosyl hydrolase 73 family.

The protein resides in the secreted. It carries out the reaction Hydrolysis of (1-&gt;4)-beta-linkages between N-acetylmuramic acid and N-acetyl-D-glucosamine residues in a peptidoglycan and between N-acetyl-D-glucosamine residues in chitodextrins.. In terms of biological role, hydrolyzes the cell wall of L.lactis and M.lysodeikticus. Required for cell separation during growth. The polypeptide is Probable N-acetylmuramidase (acmA) (Lactococcus lactis subsp. cremoris (Streptococcus cremoris)).